The following is a 58-amino-acid chain: Metallothionein-2B (58 aa).

The interval methionine 1–proline 29 is beta. A divalent metal cation is bound by residues cysteine 5, cysteine 6, cysteine 10, cysteine 12, cysteine 17, cysteine 21, cysteine 23, cysteine 26, cysteine 28, cysteine 31, cysteine 34, cysteine 38, cysteine 40, cysteine 46, cysteine 50, cysteine 54, cysteine 56, and cysteine 57. The alpha stretch occupies residues proline 30 to proline 58.

This sequence belongs to the metallothionein superfamily. Type 3 family.

Functionally, binds six divalent metal ions. Known to bind copper and cadmium. The polypeptide is Metallothionein-2B (Callinectes sapidus (Blue crab)).